Here is a 172-residue protein sequence, read N- to C-terminus: Ribosomally synthesized cyclic peptide phomopsin precursor phomA (172 aa).

An N-terminal signal peptide occupies residues 1-18 (MRFTPAIVIAAFCSLAVA). Propeptides lie at residues 19 to 35 (APAAKAIARSPSEAVED), 42 to 50 (KKRGEAVED), 57 to 65 (KKRGEAVED), 72 to 79 (KRGEAVED), 86 to 93 (KRGEAVED), 100 to 108 (KKRGEAVED), 115 to 122 (KRGEAVED), 129 to 137 (RKRGEAVED), 144 to 151 (KRGEAVED), 158 to 165 (KRGEAVED), and lysine 172.

Post-translationally, phomA is processed by several endopeptidases including kexin proteases as well as the cluster-specific S41 family peptidase phomP1 and the oligopeptidase phomG to produce 10 identical copies of the hexapeptide Tyr-Val-Ile-Pro-Ile-Asp, that is further modified to yield phomapsins. The timing and order of proteolysis of the phomA precursor and PTMs are still unknown. Two tyrosinase-like enzymes, phomQ1 and phomQ2, catalyze the chlorination and hydroxylation of Tyr, respectively. PhomYb, is proposed to be involved in the construction of the macrocyclic structure. The other 4 ustYa family proteins may be involved in PTMs that generate the unique structure of phomopsin A. PhomYa is required for the hydroxylation of C-beta of Tyr. PhomYc, phomYd, and phomYe are responsible for the biosynthesis of 2,3-dehydroisoleucine (dIle), 2,3-dehydroaspartic acid (dAsp), and 3,4-dehydroproline (dPro), respectively. While dIle formation by phomYc is indispensable for the installation of dAsp by phomYd, the order of the other PTMs have not been elucidated yet. Most of the biosynthetic enzymes likely have broad substrate specificity, and thus, there might be a metabolic grid from a precursor to phomopsin A. The enzyme(s) responsible for the biosynthesis of 3,4-dehydrovaline (dVal) have also not been identified yet. Finally, phomM acts as an S-adenosylmethionine-dependent alpha-N-methyltransferase that catalyzes two successive N-methylation reactions, converting N-desmethyl-phomopsin A to phomopsin A and phomopsin A further to an N,N-dimethylated congener called phomopsin E.

It participates in mycotoxin biosynthesis. Functionally, ribosomally synthesized cyclic peptide phomopsin precursor; part of the gene cluster that mediates the biosynthesis of the phomopsins, a group of hexapeptide mycotoxins which infects lupins and causes lupinosis disease in livestock. The phomA translated product contains a 10-fold repeated peptide embedding the hexapeptide Tyr-Val-Ile-Pro-Ile-Asp, that is converted into phomapsins. After being excised from the precursor peptide by kexin proteases, the core peptides are cyclized and modified post-translationally by enzymes encoded within the corresponding gene cluster. The chain is Ribosomally synthesized cyclic peptide phomopsin precursor phomA from Diaporthe leptostromiformis (Lupinosis disease fungus).